The chain runs to 92 residues: Small ribosomal subunit protein bS20 (92 aa).

The disordered stretch occupies residues 1 to 23 (MANSPSAKKRAKQAEKRRSHNAS). Positions 7 to 20 (AKKRAKQAEKRRSH) are enriched in basic residues.

The protein belongs to the bacterial ribosomal protein bS20 family.

Functionally, binds directly to 16S ribosomal RNA. The protein is Small ribosomal subunit protein bS20 of Ectopseudomonas mendocina (strain ymp) (Pseudomonas mendocina).